We begin with the raw amino-acid sequence, 277 residues long: Probable endonuclease 4 (277 aa).

Residues histidine 67, histidine 107, glutamate 141, aspartate 173, histidine 176, histidine 207, aspartate 220, histidine 222, and glutamate 252 each coordinate Zn(2+).

It belongs to the AP endonuclease 2 family. Zn(2+) serves as cofactor.

The enzyme catalyses Endonucleolytic cleavage to 5'-phosphooligonucleotide end-products.. Its function is as follows. Endonuclease IV plays a role in DNA repair. It cleaves phosphodiester bonds at apurinic or apyrimidinic (AP) sites, generating a 3'-hydroxyl group and a 5'-terminal sugar phosphate. The chain is Probable endonuclease 4 from Finegoldia magna (strain ATCC 29328 / DSM 20472 / WAL 2508) (Peptostreptococcus magnus).